Reading from the N-terminus, the 308-residue chain is Uricase (308 aa).

Active-site charge relay system residues include Lys5 and Thr65. Urate is bound by residues Thr65, Asp66, Phe177, Arg194, Ile242, Gln243, and Asn269. The segment at 283-308 is disordered; that stretch reads ASVLREPPAPTGFQQFSMDRGDLDEQ.

This sequence belongs to the uricase family.

It catalyses the reaction urate + O2 + H2O = 5-hydroxyisourate + H2O2. It participates in purine metabolism; urate degradation; (S)-allantoin from urate: step 1/3. Functionally, catalyzes the oxidation of uric acid to 5-hydroxyisourate, which is further processed to form (S)-allantoin. This chain is Uricase, found in Haloferax volcanii (strain ATCC 29605 / DSM 3757 / JCM 8879 / NBRC 14742 / NCIMB 2012 / VKM B-1768 / DS2) (Halobacterium volcanii).